The following is an 83-amino-acid chain: Large ribosomal subunit protein eL31 (83 aa).

It belongs to the eukaryotic ribosomal protein eL31 family.

This chain is Large ribosomal subunit protein eL31, found in Methanococcus maripaludis (strain DSM 14266 / JCM 13030 / NBRC 101832 / S2 / LL).